The following is a 459-amino-acid chain: Peptidyl-prolyl cis-trans isomerase FKBP4 (459 aa).

Methionine 1 bears the N-acetylmethionine; in peptidyl-prolyl cis-trans isomerase FKBP4; alternate mark. A disordered region spans residues 1–24 (MTAEEMKATESGAQSAPLPMEGVD). Threonine 2 bears the N-acetylthreonine; in peptidyl-prolyl cis-trans isomerase FKBP4, N-terminally processed; partial mark. The 89-residue stretch at 50-138 (GDRVFVHYTG…VFEVELFEFK (89 aa)) folds into the PPIase FKBP-type 1 domain. Threonine 143 is modified (phosphothreonine; by CK2). The PPIase FKBP-type 2 domain occupies 167–253 (GAIVEVALEG…KYELHLKSFE (87 aa)). Phosphotyrosine is present on tyrosine 220. Residues 267 to 400 (LEQSTIVKER…TQLAVCQQRI (134 aa)) are interaction with tubulin. 3 TPR repeats span residues 270–303 (STIV…LEYE), 319–352 (LASH…DSNN), and 353–386 (EKGL…YPNN). Lysine 282 bears the N6-acetyllysine mark. An Omega-N-methylarginine modification is found at arginine 373. Residues 421–459 (EENKAKAEASSGDHPTDTEMKEEQKSNTAGSQSQVETEA) are disordered. The span at 434–445 (HPTDTEMKEEQK) shows a compositional bias: basic and acidic residues. The residue at position 436 (threonine 436) is a Phosphothreonine. Lysine 441 is covalently cross-linked (Glycyl lysine isopeptide (Lys-Gly) (interchain with G-Cter in SUMO1)). Residues 446–459 (SNTAGSQSQVETEA) show a composition bias toward polar residues. Residues serine 451 and serine 453 each carry the phosphoserine modification.

As to quaternary structure, homodimer. Interacts with GLMN. Associates with HSP90AA1 and HSP70 in steroid hormone receptor complexes. Also interacts with peroxisomal phytanoyl-CoA alpha-hydroxylase (PHYH). Interacts with NR3C1 and dynein. Interacts with HSF1 in the HSP90 complex. Associates with tubulin. Interacts with MAPT/TAU. Interacts (via TPR domain) with S100A1, S100A2 and S100A6; the interaction is Ca(2+) dependent. Interaction with S100A1 and S100A2 (but not with S100A6) leads to inhibition of FKBP4-HSP90 interaction. Interacts with dynein; causes partially NR3C1 transport to the nucleus. In terms of processing, phosphorylation by CK2 results in loss of HSP90 binding activity. As to expression, widely expressed.

It is found in the cytoplasm. It localises to the cytosol. The protein resides in the mitochondrion. Its subcellular location is the nucleus. The protein localises to the cytoskeleton. It is found in the cell projection. It localises to the axon. It catalyses the reaction [protein]-peptidylproline (omega=180) = [protein]-peptidylproline (omega=0). Its activity is regulated as follows. Inhibited by FK506. Functionally, immunophilin protein with PPIase and co-chaperone activities. Component of steroid receptors heterocomplexes through interaction with heat-shock protein 90 (HSP90). May play a role in the intracellular trafficking of heterooligomeric forms of steroid hormone receptors between cytoplasm and nuclear compartments. The isomerase activity controls neuronal growth cones via regulation of TRPC1 channel opening. Also acts as a regulator of microtubule dynamics by inhibiting MAPT/TAU ability to promote microtubule assembly. May have a protective role against oxidative stress in mitochondria. This is Peptidyl-prolyl cis-trans isomerase FKBP4 (FKBP4) from Homo sapiens (Human).